Consider the following 156-residue polypeptide: D-aminoacyl-tRNA deacylase (156 aa).

The Gly-cisPro motif, important for rejection of L-amino acids signature appears at 139–140; sequence GP.

This sequence belongs to the DTD family. In terms of assembly, homodimer.

The protein resides in the cytoplasm. It catalyses the reaction glycyl-tRNA(Ala) + H2O = tRNA(Ala) + glycine + H(+). It carries out the reaction a D-aminoacyl-tRNA + H2O = a tRNA + a D-alpha-amino acid + H(+). Functionally, an aminoacyl-tRNA editing enzyme that deacylates mischarged D-aminoacyl-tRNAs. Also deacylates mischarged glycyl-tRNA(Ala), protecting cells against glycine mischarging by AlaRS. Acts via tRNA-based rather than protein-based catalysis; rejects L-amino acids rather than detecting D-amino acids in the active site. By recycling D-aminoacyl-tRNA to D-amino acids and free tRNA molecules, this enzyme counteracts the toxicity associated with the formation of D-aminoacyl-tRNA entities in vivo and helps enforce protein L-homochirality. The protein is D-aminoacyl-tRNA deacylase of Marinobacter nauticus (strain ATCC 700491 / DSM 11845 / VT8) (Marinobacter aquaeolei).